The sequence spans 308 residues: Ornithine carbamoyltransferase (308 aa).

Carbamoyl phosphate-binding positions include 52–55 (STRT), Gln-79, Arg-103, and 130–133 (HPLQ). L-ornithine contacts are provided by residues Asn-162, Asp-224, and 228–229 (SM). Carbamoyl phosphate contacts are provided by residues 264-265 (CL) and Arg-292.

Belongs to the aspartate/ornithine carbamoyltransferase superfamily. OTCase family.

The protein localises to the cytoplasm. It catalyses the reaction carbamoyl phosphate + L-ornithine = L-citrulline + phosphate + H(+). It functions in the pathway amino-acid biosynthesis; L-arginine biosynthesis; L-arginine from L-ornithine and carbamoyl phosphate: step 1/3. Reversibly catalyzes the transfer of the carbamoyl group from carbamoyl phosphate (CP) to the N(epsilon) atom of ornithine (ORN) to produce L-citrulline. The protein is Ornithine carbamoyltransferase of Pyrobaculum calidifontis (strain DSM 21063 / JCM 11548 / VA1).